A 141-amino-acid chain; its full sequence is Ribosome-binding factor A (141 aa).

It belongs to the RbfA family. Monomer. Binds 30S ribosomal subunits, but not 50S ribosomal subunits or 70S ribosomes.

The protein resides in the cytoplasm. Functionally, one of several proteins that assist in the late maturation steps of the functional core of the 30S ribosomal subunit. Associates with free 30S ribosomal subunits (but not with 30S subunits that are part of 70S ribosomes or polysomes). Required for efficient processing of 16S rRNA. May interact with the 5'-terminal helix region of 16S rRNA. The chain is Ribosome-binding factor A from Maricaulis maris (strain MCS10) (Caulobacter maris).